Consider the following 311-residue polypeptide: Methionyl-tRNA formyltransferase (311 aa).

110-113 (SLLP) provides a ligand contact to (6S)-5,6,7,8-tetrahydrofolate.

Belongs to the Fmt family.

The enzyme catalyses L-methionyl-tRNA(fMet) + (6R)-10-formyltetrahydrofolate = N-formyl-L-methionyl-tRNA(fMet) + (6S)-5,6,7,8-tetrahydrofolate + H(+). In terms of biological role, attaches a formyl group to the free amino group of methionyl-tRNA(fMet). The formyl group appears to play a dual role in the initiator identity of N-formylmethionyl-tRNA by promoting its recognition by IF2 and preventing the misappropriation of this tRNA by the elongation apparatus. The protein is Methionyl-tRNA formyltransferase of Streptococcus pyogenes serotype M2 (strain MGAS10270).